An 820-amino-acid polypeptide reads, in one-letter code: SART-1 family protein DOT2 (820 aa).

Composition is skewed to basic and acidic residues over residues 1 to 156 (MEVE…DNRG), 210 to 219 (EEKRNAEKQR), and 426 to 445 (LGSR…ERIE). Disordered regions lie at residues 1–177 (MEVE…SALD), 210–248 (EEKR…EHLS), 420–445 (GLGA…ERIE), 523–544 (SSTN…ENTV), 564–617 (KPES…PDEN), 657–678 (KLVG…SKDR), 729–748 (KLKQ…RMRE), and 762–820 (GHVK…RPKP). The residue at position 22 (Ser22) is a Phosphoserine. 3 coiled-coil regions span residues 58-120 (RDKE…EKEK), 171-235 (KEAS…NLNQ), and 433-510 (RRQA…KEEA). Over residues 525 to 543 (TNQTTDDNTTTGDETQENT) the composition is skewed to low complexity. A compositionally biased stretch (basic and acidic residues) spans 582–591 (VEVKEEHPDG). Residues 596–606 (NDTDMDAAEDS) are compositionally biased toward acidic residues. 2 stretches are compositionally biased toward basic and acidic residues: residues 607-617 (SDTKEITPDEN) and 665-678 (DGGK…SKDR). Polar residues-rich tracts occupy residues 733-744 (MKNSDTPSQSVQ) and 767-776 (GQTSDPQSGF). Positions 792 to 807 (GDRKVEHFLGIKRKSE) are enriched in basic and acidic residues.

This sequence belongs to the SNU66/SART1 family. In terms of tissue distribution, expressed in lateral root cap, columella, meristem and quiescent center (QC). Expressed in young leaves.

The protein localises to the nucleus. Plays a role in root, shoot and flower development. Probably required for normal root and shoot meristem organization and maintenance and the proper expression of PIN and PLT genes. Involved in leaf vasculature patterning. The protein is SART-1 family protein DOT2 of Arabidopsis thaliana (Mouse-ear cress).